The sequence spans 286 residues: ATP synthase gamma chain (286 aa).

Belongs to the ATPase gamma chain family. In terms of assembly, F-type ATPases have 2 components, CF(1) - the catalytic core - and CF(0) - the membrane proton channel. CF(1) has five subunits: alpha(3), beta(3), gamma(1), delta(1), epsilon(1). CF(0) has three main subunits: a, b and c.

It is found in the cell inner membrane. In terms of biological role, produces ATP from ADP in the presence of a proton gradient across the membrane. The gamma chain is believed to be important in regulating ATPase activity and the flow of protons through the CF(0) complex. In Pseudomonas putida (strain W619), this protein is ATP synthase gamma chain.